A 132-amino-acid polypeptide reads, in one-letter code: Phosphoribosyl-AMP cyclohydrolase (132 aa).

D82 lines the Mg(2+) pocket. C83 is a Zn(2+) binding site. Positions 84 and 86 each coordinate Mg(2+). Zn(2+) is bound by residues C99 and C106.

This sequence belongs to the PRA-CH family. Homodimer. Mg(2+) is required as a cofactor. Requires Zn(2+) as cofactor.

It localises to the cytoplasm. It carries out the reaction 1-(5-phospho-beta-D-ribosyl)-5'-AMP + H2O = 1-(5-phospho-beta-D-ribosyl)-5-[(5-phospho-beta-D-ribosylamino)methylideneamino]imidazole-4-carboxamide. The protein operates within amino-acid biosynthesis; L-histidine biosynthesis; L-histidine from 5-phospho-alpha-D-ribose 1-diphosphate: step 3/9. Functionally, catalyzes the hydrolysis of the adenine ring of phosphoribosyl-AMP. In Paramagnetospirillum magneticum (strain ATCC 700264 / AMB-1) (Magnetospirillum magneticum), this protein is Phosphoribosyl-AMP cyclohydrolase.